The primary structure comprises 321 residues: Sideroflexin-3 (321 aa).

An N-acetylmethionine modification is found at methionine 1. 4 helical membrane-spanning segments follow: residues 146–164 (LGMA…ALGL), 174–194 (LVGR…NIPL), 226–246 (FQVV…PPVI), and 266–286 (LQMG…CALF).

This sequence belongs to the sideroflexin family.

The protein resides in the mitochondrion membrane. It carries out the reaction L-serine(in) = L-serine(out). Mitochondrial serine transporter that mediates transport of serine into mitochondria, an important step of the one-carbon metabolism pathway. Mitochondrial serine is converted to glycine and formate, which then exits to the cytosol where it is used to generate the charged folates that serve as one-carbon donors. The chain is Sideroflexin-3 (SFXN3) from Bos taurus (Bovine).